Consider the following 318-residue polypeptide: Protein-methionine-sulfoxide reductase catalytic subunit MsrP (318 aa).

A signal peptide (tat-type signal) is located at residues 1–40 (MKQLMMSDVTPEEIFNQRRQIIKSMGLGIATLGLPNIAFA). Residues N72, 75 to 76 (YE), C130, T165, N217, R222, and 233 to 235 (SIK) each bind Mo-molybdopterin.

The protein belongs to the MsrP family. In terms of assembly, heterodimer of a catalytic subunit (MsrP) and a heme-binding subunit (MsrQ). Requires Mo-molybdopterin as cofactor. Predicted to be exported by the Tat system. The position of the signal peptide cleavage has not been experimentally proven.

It localises to the periplasm. It carries out the reaction L-methionyl-[protein] + a quinone + H2O = L-methionyl-(S)-S-oxide-[protein] + a quinol. The catalysed reaction is L-methionyl-[protein] + a quinone + H2O = L-methionyl-(R)-S-oxide-[protein] + a quinol. Functionally, part of the MsrPQ system that repairs oxidized periplasmic proteins containing methionine sulfoxide residues (Met-O), using respiratory chain electrons. Thus protects these proteins from oxidative-stress damage caused by reactive species of oxygen and chlorine generated by the host defense mechanisms. MsrPQ is essential for the maintenance of envelope integrity under bleach stress, rescuing a wide series of structurally unrelated periplasmic proteins from methionine oxidation. The catalytic subunit MsrP is non-stereospecific, being able to reduce both (R-) and (S-) diastereoisomers of methionine sulfoxide. The polypeptide is Protein-methionine-sulfoxide reductase catalytic subunit MsrP (Haemophilus ducreyi (strain 35000HP / ATCC 700724)).